The primary structure comprises 202 residues: Imidazoleglycerol-phosphate dehydratase (202 aa).

The protein belongs to the imidazoleglycerol-phosphate dehydratase family.

The protein resides in the cytoplasm. It carries out the reaction D-erythro-1-(imidazol-4-yl)glycerol 3-phosphate = 3-(imidazol-4-yl)-2-oxopropyl phosphate + H2O. Its pathway is amino-acid biosynthesis; L-histidine biosynthesis; L-histidine from 5-phospho-alpha-D-ribose 1-diphosphate: step 6/9. This chain is Imidazoleglycerol-phosphate dehydratase, found in Brucella suis (strain ATCC 23445 / NCTC 10510).